Consider the following 2616-residue polypeptide: Serine protease ndl (2616 aa).

The signal sequence occupies residues 1–43; sequence MNYNMDEMEATRLLRHPRRWWSIGFGKRIVAISILVIIVLLFS. Residues serine 215 and serine 220 each carry the phosphoserine modification. One copy of the WIID 1 repeat lies at 261–269; sequence ISWIIDGHD. A glycan (N-linked (GlcNAc...) asparagine) is linked at asparagine 291. One copy of the WIID 2 repeat lies at 320 to 328; it reads ISWILDHFD. N-linked (GlcNAc...) asparagine glycosylation occurs at asparagine 347. The disordered stretch occupies residues 352–375; sequence SASSEPIVDTENTNSDHVPTTENG. An N-linked (GlcNAc...) asparagine glycan is attached at asparagine 379. The stretch at 399–407 is one WIID 3 repeat; sequence FDWILDGEE. The N-linked (GlcNAc...) asparagine glycan is linked to asparagine 417. WIID repeat units follow at residues 446–454 and 477–485; these read FDWIIDGRE and FDWIIDGEE. N-linked (GlcNAc...) asparagine glycans are attached at residues asparagine 492 and asparagine 515. The stretch at 528–536 is one WIID 6 repeat; sequence FDWIIDGGE. Over residues 537-547 the composition is skewed to low complexity; it reads SSGEVSTSSTS. The disordered stretch occupies residues 537–574; sequence SSGEVSTSSTSQPKLTTREAISNPESPRSSHPLDNPTS. Polar residues predominate over residues 548–565; that stretch reads QPKLTTREAISNPESPRS. A phosphoserine mark is found at serine 574 and serine 581. Asparagine 598 carries N-linked (GlcNAc...) asparagine glycosylation. A glycan (O-linked (Xyl...) (glycosaminoglycan) serine) is linked at serine 794. The interval 798-817 is disordered; the sequence is GQGANIFSKNASPQKPTNGQ. Over residues 804 to 817 the composition is skewed to polar residues; that stretch reads FSKNASPQKPTNGQ. The N-linked (GlcNAc...) asparagine glycan is linked to asparagine 827. Serine 829 is a glycosylation site (O-linked (Xyl...) (glycosaminoglycan) serine). The N-linked (GlcNAc...) asparagine glycan is linked to asparagine 861. 2 consecutive LDL-receptor class A domains span residues 889–929 and 955–1006; these read SRCP…ACTC and FGCE…QCSM. Cystine bridges form between cysteine 891/cysteine 905, cysteine 899/cysteine 918, and cysteine 912/cysteine 927. Residues 929–956 form the LDL-receptor class A 2; truncated domain; that stretch reads CADRVDEERLCDGYEDCPMGEDELGCFG. 3 cysteine pairs are disulfide-bonded: cysteine 957/cysteine 982, cysteine 964/cysteine 995, and cysteine 989/cysteine 1004. N-linked (GlcNAc...) asparagine glycosylation is present at asparagine 975. The Cell attachment site motif lies at 1031–1033; the sequence is RGD. Asparagine 1064 carries N-linked (GlcNAc...) asparagine glycosylation. 2 positions are modified to phosphoserine: serine 1134 and serine 1136. Positions 1145–1383 constitute a Peptidase S1 1 domain; the sequence is IVGGSYTSAL…YLDWLEMATT (239 aa). A disulfide bridge connects residues cysteine 1170 and cysteine 1186. Residues histidine 1185 and aspartate 1233 each act as charge relay system in the active site. Cystine bridges form between cysteine 1276-cysteine 1338, cysteine 1305-cysteine 1317, cysteine 1328-cysteine 1359, cysteine 1396-cysteine 1408, cysteine 1401-cysteine 1421, and cysteine 1415-cysteine 1430. The Charge relay system role is filled by serine 1332. An LDL-receptor class A 4 domain is found at 1394–1432; that stretch reads QLCPGFICVWGGKRCIAKRQRCDRNVDCLGGEDEVGCTY. Asparagine 1445 is a glycosylation site (N-linked (GlcNAc...) asparagine). Disordered stretches follow at residues 1530 to 1557 and 1683 to 1704; these read FTVS…PSTN and PTTT…HSEK. Composition is skewed to low complexity over residues 1537 to 1557 and 1683 to 1700; these read TSPS…PSTN and PTTT…SSST. Residues 1713–1743 enclose the LDL-receptor class A 5; truncated domain; the sequence is FVCKKMSQIVDIMMRCDRKVDCEDGTDELDC. Disulfide bonds link cysteine 1728-cysteine 1745, cysteine 1734-cysteine 1764, cysteine 1758-cysteine 1773, cysteine 1776-cysteine 1789, cysteine 1783-cysteine 1802, and cysteine 1796-cysteine 1811. Residues 1745–1775 enclose the LDL-receptor class A 6; truncated domain; it reads CKDYLKGSLKGLICDGKADCEDLTDEQNCVE. The LDL-receptor class A 7 domain occupies 1774–1813; sequence VECQSNEFRCPLSKTCLPLSSRCDNKVDCKFKEDEKDCFA. Residues asparagine 1878, asparagine 1956, and asparagine 2023 are each glycosylated (N-linked (GlcNAc...) asparagine). The Peptidase S1 2 domain occupies 2027 to 2301; sequence LVNEQLHEAI…LQDIIDKPSC (275 aa). Cysteines 2055 and 2071 form a disulfide. Asparagine 2144, asparagine 2173, asparagine 2197, asparagine 2237, and asparagine 2269 each carry an N-linked (GlcNAc...) asparagine glycan. Cysteine 2177 and cysteine 2230 are disulfide-bonded. LDL-receptor class A domains lie at 2308-2346, 2349-2389, and 2419-2459; these read PDCS…KCRQ, QQCA…ICSC, and CNCT…YCFG. 6 cysteine pairs are disulfide-bonded: cysteine 2310–cysteine 2320, cysteine 2315–cysteine 2333, cysteine 2327–cysteine 2344, cysteine 2351–cysteine 2364, cysteine 2358–cysteine 2377, and cysteine 2371–cysteine 2387. An LDL-receptor class A 10; truncated domain is found at 2387-2419; the sequence is CSCFTYLQATDPSKICDGKRNCWDKSDESSVLC. N-linked (GlcNAc...) asparagine glycosylation occurs at asparagine 2420. Disulfide bonds link cysteine 2421-cysteine 2435, cysteine 2428-cysteine 2448, and cysteine 2442-cysteine 2457. Residues asparagine 2556 and asparagine 2601 are each glycosylated (N-linked (GlcNAc...) asparagine).

The protein belongs to the peptidase S1 family. Post-translationally, requires cleavage for activation (presumably). In terms of tissue distribution, follicle.

It localises to the secreted. The protein resides in the extracellular space. It is found in the extracellular matrix. In terms of biological role, component of the extracellular signaling pathway that establishes the dorsal-ventral pathway of the embryo. A protease cascade involving ndl, gd, snk and ea results in activation of the spz Toll receptor ligand; acts upstream of gd, snk and ea and is required for proteolytic processing of gd. Activation of ea requires activation of the ndl-gd-snk protease cascade and sulfation of a vitelline membrane component by pip. Localized activation of the Toll receptor in the ventral region of the embryo defines cell identities along the dorsal-ventral continuum. The sequence is that of Serine protease ndl from Drosophila melanogaster (Fruit fly).